A 280-amino-acid chain; its full sequence is Undecaprenyl-diphosphatase (280 aa).

The next 8 helical transmembrane spans lie at Phe-2 to Leu-22, Ala-45 to Ile-65, Trp-86 to Leu-106, Phe-114 to Leu-134, Leu-147 to Phe-167, Ser-188 to Trp-208, Gly-223 to Ile-243, and Phe-255 to Ile-275.

It belongs to the UppP family.

The protein resides in the cell membrane. It catalyses the reaction di-trans,octa-cis-undecaprenyl diphosphate + H2O = di-trans,octa-cis-undecaprenyl phosphate + phosphate + H(+). In terms of biological role, catalyzes the dephosphorylation of undecaprenyl diphosphate (UPP). Confers resistance to bacitracin. This chain is Undecaprenyl-diphosphatase, found in Streptococcus sanguinis (strain SK36).